Reading from the N-terminus, the 302-residue chain is AT-hook motif nuclear-localized protein 29 (302 aa).

The disordered stretch occupies residues 1–95; the sequence is MDGGYDQSGG…KPPVIVTRDS (95 aa). The segment covering 32–44 has biased composition (pro residues); it reads QLHPLPQPQPQPQ. The a.T hook DNA-binding region spans 72–84; that stretch reads KRPRGRPPGSKNK. The PPC domain occupies 96–241; that stretch reads PNVLRSHVLE…DEGGEGGEGG (146 aa). The interval 164–169 is required for the binding to non-AHL interactors; the sequence is GRFEIL. Residues 229 to 279 are disordered; it reads PLEDEGGEGGEGGEVGEGGGGEGGPPPATSSSPPSGAGQGQLRGNMSGYDQ. Residues 237-251 show a composition bias toward gly residues; the sequence is GGEGGEVGEGGGGEG.

As to quaternary structure, homodimer. Interacts with AHL5, AHL12, AHL25, AHL27, TCP4, TCP13 and EF114. Expressed in the hypocotyl and the vascular tissue of seedling.

It localises to the nucleus. Functionally, transcription factor that specifically binds AT-rich DNA sequences related to the nuclear matrix attachment regions (MARs). Acts redundantly with AHL18, AHL22 and AHL27 in the regulation of flowering and regulation of the hypocotyl elongation. Acts redundantly with AHL27/ESC to modulate hypocotyl growth inhibition in response to light. The chain is AT-hook motif nuclear-localized protein 29 from Arabidopsis thaliana (Mouse-ear cress).